Here is a 119-residue protein sequence, read N- to C-terminus: Large ribosomal subunit protein uL18 (119 aa).

This sequence belongs to the universal ribosomal protein uL18 family. In terms of assembly, part of the 50S ribosomal subunit; part of the 5S rRNA/L5/L18/L25 subcomplex. Contacts the 5S and 23S rRNAs.

In terms of biological role, this is one of the proteins that bind and probably mediate the attachment of the 5S RNA into the large ribosomal subunit, where it forms part of the central protuberance. This chain is Large ribosomal subunit protein uL18, found in Roseobacter denitrificans (strain ATCC 33942 / OCh 114) (Erythrobacter sp. (strain OCh 114)).